A 706-amino-acid polypeptide reads, in one-letter code: Elongation factor G (706 aa).

In terms of domain architecture, tr-type G spans 8 to 295 (ELYRNFGIMA…AVIDYLPSPL (288 aa)). GTP is bound by residues 17–24 (AHIDAGKT), 92–96 (DTPGH), and 146–149 (NKMD).

Belongs to the TRAFAC class translation factor GTPase superfamily. Classic translation factor GTPase family. EF-G/EF-2 subfamily.

The protein resides in the cytoplasm. In terms of biological role, catalyzes the GTP-dependent ribosomal translocation step during translation elongation. During this step, the ribosome changes from the pre-translocational (PRE) to the post-translocational (POST) state as the newly formed A-site-bound peptidyl-tRNA and P-site-bound deacylated tRNA move to the P and E sites, respectively. Catalyzes the coordinated movement of the two tRNA molecules, the mRNA and conformational changes in the ribosome. This chain is Elongation factor G, found in Ruegeria sp. (strain TM1040) (Silicibacter sp.).